Consider the following 288-residue polypeptide: Zinc finger protein 42 (288 aa).

Composition is skewed to basic and acidic residues over residues 1 to 11 (MNEQKMNEQMK) and 26 to 38 (ALDR…DEAR). The interval 1-48 (MNEQKMNEQMKKTAKTSGQKGPGGRALDRLTLKQDEARPVQNTRVEAP) is disordered. 4 consecutive C2H2-type zinc fingers follow at residues 170–194 (LECP…MLVH), 199–221 (HVCA…FLVH), 227–251 (YQCT…IRIH), and 258–281 (VCPF…ILTH). Glycyl lysine isopeptide (Lys-Gly) (interchain with G-Cter in ubiquitin) cross-links involve residues Lys213 and Lys215.

It belongs to the krueppel C2H2-type zinc-finger protein family. In terms of processing, polyubiquitinated by RNF12, leading to proteasomal degradation. As to expression, restricted to testis, to germ cells in the early stages of spermatogenesis. Not expressed in spermatids, nor spermatozoa. Expressed in embryonic stem (ES) cells.

Its subcellular location is the nucleus. Functionally, involved in the reprogramming of X-chromosome inactivation during the acquisition of pluripotency. Required for efficient elongation of TSIX, a non-coding RNA antisense to XIST. Binds DXPas34 enhancer within the TSIX promoter. Involved in ES cell self-renewal. This Mus musculus (Mouse) protein is Zinc finger protein 42 (Zfp42).